Consider the following 182-residue polypeptide: Probable RNA 2'-phosphotransferase (182 aa).

The protein belongs to the KptA/TPT1 family.

Its function is as follows. Removes the 2'-phosphate from RNA via an intermediate in which the phosphate is ADP-ribosylated by NAD followed by a presumed transesterification to release the RNA and generate ADP-ribose 1''-2''-cyclic phosphate (APPR&gt;P). May function as an ADP-ribosylase. The sequence is that of Probable RNA 2'-phosphotransferase from Herpetosiphon aurantiacus (strain ATCC 23779 / DSM 785 / 114-95).